A 33-amino-acid chain; its full sequence is Alpha-amanitin proprotein (33 aa).

A propeptide spanning residues 1–10 (MSDINATRLP) is cleaved from the precursor. Position 11 is a (3R,4R)-4,5-dihydroxyisoleucine; in form alpha-amanitin (I11). (3R,4S)-4-hydroxyisoleucine; in form gamma-amanitin is present on I11. A cross-link (cyclopeptide (Ile-Pro)) is located at residues 11–18 (IWGIGCNP). Residues 12–16 (WGIGC) constitute a cross-link (2'-cysteinyl-6'-hydroxytryptophan sulfoxide (Trp-Cys)). 4-hydroxyproline is present on P18. The propeptide occupies 19-33 (CVGDEVTALLTRGEA).

The protein belongs to the MSDIN fungal toxin family. Processed by the macrocyclase-peptidase enzyme POPB to yield a toxic cyclic decapeptide. POPB first removes 10 residues from the N-terminus. Conformational trapping of the remaining peptide forces the enzyme to release this intermediate rather than proceed to macrocyclization. The enzyme rebinds the remaining peptide in a different conformation and catalyzes macrocyclization of the N-terminal 8 residues.

Its function is as follows. Major toxin belonging to the bicyclic octapeptides amatoxins that acts by binding non-competitively to RNA polymerase II and greatly slowing the elongation of transcripts from target promoters. In Amanita fuligineoides, this protein is Alpha-amanitin proprotein.